An 812-amino-acid chain; its full sequence is ATP-dependent zinc metalloprotease FtsH (812 aa).

At 1 to 21 (MPPSPPRPPKFPGSGRPESPN) the chain is on the cytoplasmic side. The helical transmembrane segment at 22 to 42 (WGVWVMVLLIVGVLAFGFFTP) threads the bilayer. Over 43–241 (ESFGLGPRKE…TKFKRESGSW (199 aa)) the chain is Extracellular. The chain crosses the membrane as a helical span at residues 242 to 262 (GGILLNLLPIVLILVILFFMF). At 263-812 (RAQSGGARGA…EFGKDGGEKK (550 aa)) the chain is on the cytoplasmic side. Residue 333–340 (GAPGTGKT) participates in ATP binding. Histidine 555 provides a ligand contact to Zn(2+). The active site involves glutamate 556. Zn(2+) contacts are provided by histidine 559 and aspartate 631. Residues 739–812 (KNPPARVTPP…EFGKDGGEKK (74 aa)) form a disordered region. Composition is skewed to basic and acidic residues over residues 757–785 (QPGK…RKME) and 803–812 (EFGKDGGEKK).

It in the central section; belongs to the AAA ATPase family. This sequence in the C-terminal section; belongs to the peptidase M41 family. In terms of assembly, homohexamer. Zn(2+) serves as cofactor.

It is found in the cell membrane. Its function is as follows. Acts as a processive, ATP-dependent zinc metallopeptidase for both cytoplasmic and membrane proteins. Plays a role in the quality control of integral membrane proteins. The sequence is that of ATP-dependent zinc metalloprotease FtsH from Akkermansia muciniphila (strain ATCC BAA-835 / DSM 22959 / JCM 33894 / BCRC 81048 / CCUG 64013 / CIP 107961 / Muc).